Consider the following 446-residue polypeptide: Bifunctional protein GlmU (446 aa).

Residues 1–226 form a pyrophosphorylase region; sequence MLAVAILAAG…PDEVNGINDR (226 aa). UDP-N-acetyl-alpha-D-glucosamine is bound by residues 7-10, K21, Q73, and 78-79; these read LAAG and GT. A Mg(2+)-binding site is contributed by D103. Residues G140, E155, N170, and N224 each coordinate UDP-N-acetyl-alpha-D-glucosamine. N224 provides a ligand contact to Mg(2+). Positions 227–247 are linker; the sequence is CQLANCEALLQERLRNYWMKE. The N-acetyltransferase stretch occupies residues 248 to 446; that stretch reads GVTFTDPASC…SKQLIKNGWQ (199 aa). Positions 329 and 347 each coordinate UDP-N-acetyl-alpha-D-glucosamine. The Proton acceptor role is filled by H359. UDP-N-acetyl-alpha-D-glucosamine-binding residues include Y362 and N373. Acetyl-CoA-binding positions include A376, 382 to 383, A419, and R436; that span reads NY.

The protein in the N-terminal section; belongs to the N-acetylglucosamine-1-phosphate uridyltransferase family. This sequence in the C-terminal section; belongs to the transferase hexapeptide repeat family. As to quaternary structure, homotrimer. Mg(2+) is required as a cofactor.

It localises to the cytoplasm. The enzyme catalyses alpha-D-glucosamine 1-phosphate + acetyl-CoA = N-acetyl-alpha-D-glucosamine 1-phosphate + CoA + H(+). It carries out the reaction N-acetyl-alpha-D-glucosamine 1-phosphate + UTP + H(+) = UDP-N-acetyl-alpha-D-glucosamine + diphosphate. It functions in the pathway nucleotide-sugar biosynthesis; UDP-N-acetyl-alpha-D-glucosamine biosynthesis; N-acetyl-alpha-D-glucosamine 1-phosphate from alpha-D-glucosamine 6-phosphate (route II): step 2/2. It participates in nucleotide-sugar biosynthesis; UDP-N-acetyl-alpha-D-glucosamine biosynthesis; UDP-N-acetyl-alpha-D-glucosamine from N-acetyl-alpha-D-glucosamine 1-phosphate: step 1/1. Its pathway is bacterial outer membrane biogenesis; LPS lipid A biosynthesis. Its function is as follows. Catalyzes the last two sequential reactions in the de novo biosynthetic pathway for UDP-N-acetylglucosamine (UDP-GlcNAc). The C-terminal domain catalyzes the transfer of acetyl group from acetyl coenzyme A to glucosamine-1-phosphate (GlcN-1-P) to produce N-acetylglucosamine-1-phosphate (GlcNAc-1-P), which is converted into UDP-GlcNAc by the transfer of uridine 5-monophosphate (from uridine 5-triphosphate), a reaction catalyzed by the N-terminal domain. The chain is Bifunctional protein GlmU from Prochlorococcus marinus (strain MIT 9313).